The chain runs to 144 residues: Protein SprT-like (144 aa).

One can recognise a SprT-like domain in the interval 4–143 (NKYVQEVSLQ…GKCRGKLTLK (140 aa)). H64 is a Zn(2+) binding site. Residue E65 is part of the active site. H68 is a Zn(2+) binding site.

The protein belongs to the SprT family. The cofactor is Zn(2+).

The protein localises to the cytoplasm. This Streptococcus suis (strain 98HAH33) protein is Protein SprT-like.